The primary structure comprises 194 residues: Probable GTP-binding protein EngB (194 aa).

Positions glycine 22–isoleucine 194 constitute an EngB-type G domain. Residues glycine 30 to serine 37, glycine 57 to threonine 61, aspartate 75 to glycine 78, threonine 142 to aspartate 145, and phenylalanine 175 to serine 177 each bind GTP. Mg(2+) is bound by residues serine 37 and threonine 59.

This sequence belongs to the TRAFAC class TrmE-Era-EngA-EngB-Septin-like GTPase superfamily. EngB GTPase family. The cofactor is Mg(2+).

In terms of biological role, necessary for normal cell division and for the maintenance of normal septation. The polypeptide is Probable GTP-binding protein EngB (Leuconostoc mesenteroides subsp. mesenteroides (strain ATCC 8293 / DSM 20343 / BCRC 11652 / CCM 1803 / JCM 6124 / NCDO 523 / NBRC 100496 / NCIMB 8023 / NCTC 12954 / NRRL B-1118 / 37Y)).